A 452-amino-acid polypeptide reads, in one-letter code: Cobyrinate a,c-diamide synthase (452 aa).

The GATase cobBQ-type domain maps to 244 to 437; the sequence is KIAYAYDEAF…VHINLYTYKE (194 aa). Cysteine 327 (nucleophile) is an active-site residue.

Belongs to the CobB/CbiA family. It depends on Mg(2+) as a cofactor.

The enzyme catalyses cob(II)yrinate + 2 L-glutamine + 2 ATP + 2 H2O = cob(II)yrinate a,c diamide + 2 L-glutamate + 2 ADP + 2 phosphate + 2 H(+). It functions in the pathway cofactor biosynthesis; adenosylcobalamin biosynthesis; cob(II)yrinate a,c-diamide from sirohydrochlorin (anaerobic route): step 10/10. Functionally, catalyzes the ATP-dependent amidation of the two carboxylate groups at positions a and c of cobyrinate, using either L-glutamine or ammonia as the nitrogen source. This chain is Cobyrinate a,c-diamide synthase, found in Caldanaerobacter subterraneus subsp. tengcongensis (strain DSM 15242 / JCM 11007 / NBRC 100824 / MB4) (Thermoanaerobacter tengcongensis).